The following is a 241-amino-acid chain: MANKREPAPGWPIVSGEYVVGNPESCVGVVTLGSHGLEQACIDAGAAIAGPCHTENLGIEKVVANYISNPNIRFMILCGSEVQGHITGQCFKALWENGIGDDGGIIGAKGAIPFLENVNKEAVERFRRQIVEVVDLIDCEDIGKITQAIKECLSKDPGAIDEDPFIIELEGGKGGGEEEEGVIKPITPEMAIIESRMRLIGNEMCYNGLLAKWQAGYYNGKIQGIATGLFLMLLIMGILMF.

The Cytoplasmic segment spans residues Met1–Gly220. 5-hydroxybenzimidazolylcob(I)amide is bound at residue His85. Residues Lys221 to Phe241 traverse the membrane as a helical segment.

Belongs to the MtrA family. The complex is composed of 8 subunits; MtrA, MtrB, MtrC, MtrD, MtrE, MtrF, MtrG and MtrH. 5-hydroxybenzimidazolylcob(I)amide serves as cofactor.

It is found in the cell membrane. The enzyme catalyses 5-methyl-5,6,7,8-tetrahydromethanopterin + coenzyme M + 2 Na(+)(in) = 5,6,7,8-tetrahydromethanopterin + methyl-coenzyme M + 2 Na(+)(out). It functions in the pathway one-carbon metabolism; methanogenesis from CO(2); methyl-coenzyme M from 5,10-methylene-5,6,7,8-tetrahydromethanopterin: step 2/2. Part of a complex that catalyzes the formation of methyl-coenzyme M and tetrahydromethanopterin from coenzyme M and methyl-tetrahydromethanopterin. This is an energy-conserving, sodium-ion translocating step. The sequence is that of Tetrahydromethanopterin S-methyltransferase subunit A from Methanocaldococcus jannaschii (strain ATCC 43067 / DSM 2661 / JAL-1 / JCM 10045 / NBRC 100440) (Methanococcus jannaschii).